The following is a 609-amino-acid chain: Protein FRIGIDA (609 aa).

Residues 1-18 show a composition bias toward low complexity; sequence MSNYPPTVAAQPTTTANP. The disordered stretch occupies residues 1-31; sequence MSNYPPTVAAQPTTTANPLLQRHQSEQRRRE. Coiled coils occupy residues 60–97 and 409–440; these read DELA…LESN and QIKE…LMEE. 2 disordered regions span residues 454–488 and 587–609; these read RPRL…DDQD and SEER…LDPK. Over residues 474 to 484 the composition is skewed to basic and acidic residues; that stretch reads YRDRSFPSQRD. Polar residues predominate over residues 594–609; that stretch reads LSNQRSPRSNSSLDPK.

This sequence belongs to the Frigida family. Homodimer. Component of the transcription activator complex FRI-C composed of FRI, FRL1, SUF4, FLX and FES1. Interacts (via N-terminus) with FRL1 and (via C-terminus) with FLX (via N-terminus), SUF4 (via C-terminus) and FES1 (via C-terminus). Interacts with ASHH2 and RIN1, a component of the SWR1 chromatin-remodeling complex. Interacts with CBP20, FIP1 and FIP2. In terms of tissue distribution, expressed in ovules, but not in stamens.

Its subcellular location is the nucleus speckle. In terms of biological role, required for the regulation of flowering time in the late-flowering phenotype. Involved in the enrichment of a WDR5A-containing COMPASS-like complex at the 'FLOWERING LOCUS C' that trimethylates histone H3 'Lys-4', leading to FLC up-regulation and RNA levels increase. Variants with an early-flowering phenotype (Including cv. Columbia, cv. Landsberg Erecta and cv. Wassilewskija) show loss-of-function mutations of FRI. Able to delay flowering independently of FRL1 activity. Dispensable for the reactivation of FLC in early embryogenesis, but required to maintain high levels of FLC expression in later embryonic and vegetative development. Suppresses the repression of FLC by the autonomous pathway, but has no effect on the expression of the genes involved in this pathway. The chain is Protein FRIGIDA from Arabidopsis thaliana (Mouse-ear cress).